The following is a 323-amino-acid chain: CTD kinase subunit beta (323 aa).

Belongs to the cyclin family. CTDK-I consists of three subunits, CTK1, CTK2 and CTK3 (also called alpha, beta and gamma). Interacts with CTK1. Heterodimerization with CTK3 is required to protect this subunit from degradation. In terms of processing, phosphorylated. Ubiquitinated. Phosphorylation and ubiquitination lead to degradation in growth-related way by the ubiquitin-proteasome pathway. Neither phosphorylation nor degradation requires association with CTK1.

The protein resides in the nucleus. The protein localises to the nucleolus. In terms of biological role, cyclin subunit of the CTDK-I complex, which hyperphosphorylates the C-terminal heptapeptide repeat domain (CTD) of the largest RNA polymerase II subunit. CTDK-I phosphorylates 'Ser-5' if the CTD substrate is not phosphorylated at 'Ser-5', but will phosphorylate 'Ser-2' of a CTD substrate if 'Ser-5' is already phosphorylated. CTDK-I is also more reactive toward substrates that are prephosphorylated at 'Ser-2' or 'Ser-5' compared with an unphosphorylated CTD substrate, therefore efficiently creating doubly phosphorylated CTD repeats. Involved in RNA polymerase II transcriptional elongation, and as part of the CTDK-I complex, pre-mRNA 3'-end processing and SET2 mediated H3K36 methylation. Together with CTK3, required for CTK1 CTD kinase activation. Required for DNA damage induced transcription. Involved in the adaptation to alternative carbon sources, including galactose, glycerol and ethanol, but not raffinose. Required for the integrity of the rDNA locus. The sequence is that of CTD kinase subunit beta (CTK2) from Saccharomyces cerevisiae (strain ATCC 204508 / S288c) (Baker's yeast).